Reading from the N-terminus, the 975-residue chain is Translation initiation factor IF-2 (975 aa).

Residues 48-63 (DHLRKSHGATDGDKRK) are compositionally biased toward basic and acidic residues. Disordered stretches follow at residues 48–84 (DHLR…GKAR) and 98–388 (KRDD…QAPT). Over residues 104–115 (ETGADQAQAQTD) the composition is skewed to low complexity. Residues 120-177 (AELKRREEEARREAELLEKQAQELRERQERLEREEAERRAREEAAEAERRRAEEEAAA) are compositionally biased toward basic and acidic residues. Residues 178-211 (KRAAAAQAEAAQQAAAAREQAQRAQSEPAEQSAQ) show a composition bias toward low complexity. Over residues 212–263 (DEARAAAERAAQREAAKKAEDAAREAADKARAEQEEIRKRREAAEAEARAIR) the composition is skewed to basic and acidic residues. A compositionally biased stretch (low complexity) spans 302-330 (KPAGEAAAARPAAKKPASGAPAPAAAPAG). The segment covering 359-372 (SSGGVDRGWRGGPK) has biased composition (gly residues). Positions 475–644 (PRPPVVTVMG…LLQAEVLELK (170 aa)) constitute a tr-type G domain. Residues 484–491 (GHVDHGKT) form a G1 region. 484–491 (GHVDHGKT) contributes to the GTP binding site. Residues 509-513 (GITQH) form a G2 region. The segment at 530-533 (DTPG) is G3. GTP is bound by residues 530 to 534 (DTPGH) and 584 to 587 (NKID). A G4 region spans residues 584 to 587 (NKID). A G5 region spans residues 620–622 (SAK).

This sequence belongs to the TRAFAC class translation factor GTPase superfamily. Classic translation factor GTPase family. IF-2 subfamily.

It localises to the cytoplasm. Its function is as follows. One of the essential components for the initiation of protein synthesis. Protects formylmethionyl-tRNA from spontaneous hydrolysis and promotes its binding to the 30S ribosomal subunits. Also involved in the hydrolysis of GTP during the formation of the 70S ribosomal complex. The polypeptide is Translation initiation factor IF-2 (Burkholderia mallei (strain NCTC 10247)).